The sequence spans 219 residues: Ribose-5-phosphate isomerase A (219 aa).

Substrate-binding positions include 28–31 (TGST), 81–84 (DGAD), and 94–97 (KGGG). The active-site Proton acceptor is E103. K121 is a binding site for substrate.

It belongs to the ribose 5-phosphate isomerase family. As to quaternary structure, homodimer.

The catalysed reaction is aldehydo-D-ribose 5-phosphate = D-ribulose 5-phosphate. Its pathway is carbohydrate degradation; pentose phosphate pathway; D-ribose 5-phosphate from D-ribulose 5-phosphate (non-oxidative stage): step 1/1. Functionally, catalyzes the reversible conversion of ribose-5-phosphate to ribulose 5-phosphate. The sequence is that of Ribose-5-phosphate isomerase A from Nitrosomonas europaea (strain ATCC 19718 / CIP 103999 / KCTC 2705 / NBRC 14298).